A 55-amino-acid polypeptide reads, in one-letter code: Lantibiotic epilancin 15X (55 aa).

The propeptide at 1–24 is cleaved by ElxP; that stretch reads MKKELFDLNLNKDIEAQKSDLNPQ. A D-lactate; by the dehydratase ElxB and the dehydrogenase ElxO modification is found at Ser25. Ser27 carries the post-translational modification 2,3-didehydroalanine (Ser); by the dehydratase ElxB. Residues Thr31 and Thr32 each carry the 2,3-didehydrobutyrine; by the dehydratase ElxB modification. A cross-link (lanthionine (Ser-Cys); by the dehydratase ElxB and the cyclase ElxC) is located at residues 36 to 40; the sequence is SKKLC. 2 cross-links (beta-methyllanthionine (Thr-Cys); by the dehydratase ElxB and the cyclase ElxC) span residues 44 to 47 and 46 to 49; these read TLTC and TCGC. Thr52 carries the 2,3-didehydrobutyrine; by the dehydratase ElxB modification.

Post-translationally, maturation of this lantibiotic involves the enzymatic conversion of Thr, and Ser into dehydrated AA by ElxB and the formation of thioether bonds with cysteine by the cyclase ElxC. The next steps are cleavage of the leader peptide by ElxP and membrane translocation by ElxT. The leader peptide may be removed before membrane translocation, in contrast to other lantibiotics for which the cleavage occur after translocation. This is suggested by the probable cytoplasmic localization of the serine protease ElxP that cleaves the leader peptide. In terms of processing, the N-terminal D-lactate is probably produced by dehydration of Ser-25 by ElxB, followed by proteolytic removal of the leader peptide by the serine protease ElxP and hydrolysis of the resulting new N-terminal dehydroalanine. This hydrolysis may occur spontaneously. The pyruvate group thus formed is reduced to D-lactate by the NADPH-dependent oxidoreductase ElxO. This N-terminal D-lactate protects the lantibiotic against degradation against aminopeptidase. It is not established whether the 2,3-didehydrobutyrines are the E- or Z-isomers.

Lanthionine-containing peptide antibiotic (lantibiotic) active on Gram-positive bacteria such as staphylococci, enterococci and streptococci. The bactericidal activity of lantibiotics is based on depolarization of energized bacterial cytoplasmic membranes, initiated by the formation of aqueous transmembrane pores. The sequence is that of Lantibiotic epilancin 15X from Staphylococcus epidermidis.